A 71-amino-acid chain; its full sequence is Conotoxin AbVIG (71 aa).

An N-terminal signal peptide occupies residues 1 to 17 (VLIIAVLFLTACQLTTA). A propeptide spanning residues 18-40 (ETSSRGKQKHRALRSTDKNSRMT) is cleaved from the precursor. 3 disulfide bridges follow: Cys-43–Cys-57, Cys-50–Cys-61, and Cys-56–Cys-68.

This sequence belongs to the conotoxin O1 superfamily. As to expression, expressed by the venom duct.

The protein localises to the secreted. The chain is Conotoxin AbVIG from Conus abbreviatus (Abbreviated cone).